Here is a 406-residue protein sequence, read N- to C-terminus: Sorting nexin-6 (406 aa).

At methionine 1 the chain carries N-acetylmethionine. Methionine 2 bears the N-acetylmethionine; in Sorting nexin-6, N-terminally processed mark. The tract at residues 2-179 is interaction with PIM1; sequence MEGLDDGPDF…NQDLSVRGKN (178 aa). Residues 26 to 173 form the PX domain; it reads LQSDAALQVD…HVFLEYNQDL (148 aa). A 1,2-diacyl-sn-glycero-3-phospho-(1D-myo-inositol-4,5-bisphosphate) is bound by residues 41 to 47, 100 to 106, and 114 to 117; these read SERDKVK, FDASREK, and EGSM. Phosphoserine is present on residues serine 116 and serine 194. The segment at 182–199 is membrane-binding amphipathic helix; sequence EKLEDFFKNMVKSADGVI. The 204-residue stretch at 203 to 406 folds into the BAR domain; it reads VKDVDDFFEH…NCLAVLNGDT (204 aa).

This sequence belongs to the sorting nexin family. Forms heterodimers with BAR domain-containing sorting nexins SNX1 and SNX2. The heterodimers are proposed to self-assemble into helical arrays on the membrane to stabilize and expand local membrane curvature underlying endosomal tubule formation. Thought to be a component of the originally described retromer complex (also called SNX-BAR retromer) which is a pentamer containing the heterotrimeric retromer cargo-selective complex (CSC), also described as vacuolar protein sorting subcomplex (VPS), and a heterodimeric membrane-deforming subcomplex formed between SNX1 or SNX2 and SNX5 or SNX6 (also called SNX-BAR subcomplex); the respective CSC and SNX-BAR subcomplexes associate with low affinity. Interacts with SNX1, SNX2, VPS26A, VPS29, VPS35, CDKN1B, TGFB receptors, BACE1, BRMS1, PIP5K1C isoform 3. Interacts with DCTN1; the association with DCTN1 is involved in movement of retromer-c ontaining vesicles toward the TGN. Interacts with CDKN1B and GIT1. Interacts with PIM1; translocating SNX6 to the nucleus. In vitro phosphorylated by PIM1; not affecting PIM1-dependent nuclear translocation.

The protein localises to the early endosome. The protein resides in the early endosome membrane. It localises to the cytoplasmic vesicle. Its subcellular location is the cytoplasm. It is found in the nucleus. Involved in several stages of intracellular trafficking. Interacts with membranes phosphatidylinositol 3,4-bisphosphate and/or phosphatidylinositol 4,5-bisphosphate. Acts in part as component of the retromer membrane-deforming SNX-BAR subcomplex. The SNX-BAR retromer mediates retrograde transport of cargo proteins from endosomes to the trans-Golgi network (TGN) and is involved in endosome-to-plasma membrane transport for cargo protein recycling. The SNX-BAR subcomplex functions to deform the donor membrane into a tubular profile called endosome-to-TGN transport carrier (ETC). Does not have in vitro vesicle-to-membrane remodeling activity. Involved in retrograde endosome-to-TGN transport of lysosomal enzyme receptor IGF2R. May function as link between transport vesicles and dynactin. Negatively regulates retrograde transport of BACE1 from the cell surface to the trans-Golgi network. Involved in E-cadherin sorting and degradation; inhibits PIP5K1C isoform 3-mediated E-cadherin degradation. In association with GIT1 involved in EGFR degradation. Promotes lysosomal degradation of CDKN1B. May contribute to transcription regulation. This Homo sapiens (Human) protein is Sorting nexin-6 (SNX6).